Consider the following 425-residue polypeptide: Enolase (425 aa).

Gln-162 is a binding site for (2R)-2-phosphoglycerate. Glu-204 functions as the Proton donor in the catalytic mechanism. Mg(2+)-binding residues include Asp-241, Glu-282, and Asp-309. (2R)-2-phosphoglycerate is bound by residues Lys-334, Arg-363, Ser-364, and Lys-385. Lys-334 functions as the Proton acceptor in the catalytic mechanism.

It belongs to the enolase family. Mg(2+) serves as cofactor.

It is found in the cytoplasm. The protein resides in the secreted. It localises to the cell surface. It carries out the reaction (2R)-2-phosphoglycerate = phosphoenolpyruvate + H2O. It functions in the pathway carbohydrate degradation; glycolysis; pyruvate from D-glyceraldehyde 3-phosphate: step 4/5. Its function is as follows. Catalyzes the reversible conversion of 2-phosphoglycerate (2-PG) into phosphoenolpyruvate (PEP). It is essential for the degradation of carbohydrates via glycolysis. In Corynebacterium urealyticum (strain ATCC 43042 / DSM 7109), this protein is Enolase.